Reading from the N-terminus, the 368-residue chain is Histidinol dehydrogenase (368 aa).

Residues Thr-197, Gln-218, and His-221 each coordinate substrate. Positions 218 and 221 each coordinate Zn(2+). Residues Glu-276 and His-277 each act as proton acceptor in the active site. 4 residues coordinate substrate: His-277, Asp-306, Glu-358, and His-363. Position 306 (Asp-306) interacts with Zn(2+). His-363 contributes to the Zn(2+) binding site.

This sequence belongs to the histidinol dehydrogenase family. Zn(2+) serves as cofactor.

It carries out the reaction L-histidinol + 2 NAD(+) + H2O = L-histidine + 2 NADH + 3 H(+). The protein operates within amino-acid biosynthesis; L-histidine biosynthesis; L-histidine from 5-phospho-alpha-D-ribose 1-diphosphate: step 9/9. Its function is as follows. Catalyzes the sequential NAD-dependent oxidations of L-histidinol to L-histidinaldehyde and then to L-histidine. The chain is Histidinol dehydrogenase from Pyrobaculum aerophilum (strain ATCC 51768 / DSM 7523 / JCM 9630 / CIP 104966 / NBRC 100827 / IM2).